The primary structure comprises 272 residues: 1,4-dihydroxy-2-naphthoyl-CoA synthase (272 aa).

Substrate-binding positions include Arg-33, 72-76 (SGGDQ), Tyr-84, 116-120 (YAIGG), Thr-142, Ser-148, Tyr-245, and Lys-260. 141-143 (QTG) provides a ligand contact to hydrogencarbonate.

Belongs to the enoyl-CoA hydratase/isomerase family. MenB subfamily. Hydrogencarbonate serves as cofactor.

The catalysed reaction is 2-succinylbenzoyl-CoA + H(+) = 1,4-dihydroxy-2-naphthoyl-CoA + H2O. Its pathway is quinol/quinone metabolism; 1,4-dihydroxy-2-naphthoate biosynthesis; 1,4-dihydroxy-2-naphthoate from chorismate: step 6/7. The protein operates within quinol/quinone metabolism; menaquinone biosynthesis. In terms of biological role, converts o-succinylbenzoyl-CoA (OSB-CoA) to 1,4-dihydroxy-2-naphthoyl-CoA (DHNA-CoA). The protein is 1,4-dihydroxy-2-naphthoyl-CoA synthase of Staphylococcus epidermidis (strain ATCC 12228 / FDA PCI 1200).